The sequence spans 644 residues: Phosphatidylinositol polyphosphate 5-phosphatase type IV (644 aa).

Residues Met-1–Pro-193 form a disordered region. A run of 8 repeats spans residues Pro-10 to Pro-13, Pro-15 to Pro-18, Pro-28 to Pro-31, Pro-39 to Val-42, Pro-55 to Pro-58, Pro-69 to Ala-71, Pro-72 to Pro-74, and Pro-75 to Pro-78. The interval Pro-10–Pro-242 is 13 X 4 AA repeats of P-X-X-P. Over residues Pro-78–Gly-90 the composition is skewed to basic and acidic residues. Ser-99 carries the post-translational modification Phosphoserine. The span at Asn-107–Ser-118 shows a compositional bias: polar residues. Copy 9 of the repeat occupies Pro-121–Pro-124. The span at Gly-152 to Gly-163 shows a compositional bias: low complexity. Repeat copies occupy residues Pro-169–Pro-172, Pro-183–Leu-185, Pro-190–Pro-193, and Pro-236–Pro-239. Phosphoserine occurs at positions 241 and 256. Residue Cys-641 is modified to Cysteine methyl ester. Cys-641 is lipidated: S-farnesyl cysteine. Residues Ser-642–Ser-644 constitute a propeptide, removed in mature form.

Belongs to the inositol polyphosphate 5-phosphatase family. Interacts (when prenylated) with PDE6D; this is important for normal location in cilia.

Its subcellular location is the cytoplasm. The protein resides in the cytoskeleton. It localises to the cilium axoneme. The protein localises to the golgi apparatus. It is found in the golgi stack membrane. Its subcellular location is the cell membrane. The protein resides in the cell projection. It localises to the ruffle. The protein localises to the nucleus. It carries out the reaction a 1,2-diacyl-sn-glycero-3-phospho-(1D-myo-inositol-4,5-bisphosphate) + H2O = a 1,2-diacyl-sn-glycero-3-phospho-(1D-myo-inositol 4-phosphate) + phosphate. The catalysed reaction is a 1,2-diacyl-sn-glycero-3-phospho-(1D-myo-inositol-3,4,5-trisphosphate) + H2O = a 1,2-diacyl-sn-glycero-3-phospho-(1D-myo-inositol-3,4-bisphosphate) + phosphate. The enzyme catalyses a 1,2-diacyl-sn-glycero-3-phospho-(1D-myo-inositol-3,5-bisphosphate) + H2O = a 1,2-diacyl-sn-glycero-3-phospho-(1D-myo-inositol-3-phosphate) + phosphate. Phosphatidylinositol (PtdIns) phosphatase that specifically hydrolyzes the 5-phosphate of phosphatidylinositol-3,4,5-trisphosphate (PtdIns(3,4,5)P3), phosphatidylinositol 4,5-bisphosphate(PtdIns(4,5)P2) and phosphatidylinositol 3,5-bisphosphate (PtdIns(3,5)P2). Specific for lipid substrates, inactive towards water soluble inositol phosphates. Plays an essential role in the primary cilium by controlling ciliary growth and phosphoinositide 3-kinase (PI3K) signaling and stability. The protein is Phosphatidylinositol polyphosphate 5-phosphatase type IV (INPP5E) of Pan troglodytes (Chimpanzee).